The following is a 668-amino-acid chain: Fructose-1,6-bisphosphatase class 3 (668 aa).

This sequence belongs to the FBPase class 3 family. Mn(2+) is required as a cofactor.

It carries out the reaction beta-D-fructose 1,6-bisphosphate + H2O = beta-D-fructose 6-phosphate + phosphate. It participates in carbohydrate biosynthesis; gluconeogenesis. The chain is Fructose-1,6-bisphosphatase class 3 from Clostridium botulinum (strain Kyoto / Type A2).